Here is a 179-residue protein sequence, read N- to C-terminus: MARLKDYYQKELVAKLKTELGLDNIMEVPTIKKITLNMGVGDAAKDKKIMTFALNDLTAIAGQKPVVTKSKKSIAGFKIRDGWPIGAKVTLRGDRMYEFLDRLITIAIPRIRDFRGLSAKSFDGRGNYSLGMREQISFPEIDYDKVDSIRGLDISITTTAKNDDQGRALLKAFGFPFKS.

This sequence belongs to the universal ribosomal protein uL5 family. Part of the 50S ribosomal subunit; part of the 5S rRNA/L5/L18/L25 subcomplex. Contacts the 5S rRNA and the P site tRNA. Forms a bridge to the 30S subunit in the 70S ribosome.

In terms of biological role, this is one of the proteins that bind and probably mediate the attachment of the 5S RNA into the large ribosomal subunit, where it forms part of the central protuberance. In the 70S ribosome it contacts protein S13 of the 30S subunit (bridge B1b), connecting the 2 subunits; this bridge is implicated in subunit movement. Contacts the P site tRNA; the 5S rRNA and some of its associated proteins might help stabilize positioning of ribosome-bound tRNAs. This Francisella tularensis subsp. tularensis (strain SCHU S4 / Schu 4) protein is Large ribosomal subunit protein uL5.